The sequence spans 392 residues: ATP phosphoribosyltransferase regulatory subunit (392 aa).

Belongs to the class-II aminoacyl-tRNA synthetase family. HisZ subfamily. In terms of assembly, heteromultimer composed of HisG and HisZ subunits.

It is found in the cytoplasm. Its pathway is amino-acid biosynthesis; L-histidine biosynthesis; L-histidine from 5-phospho-alpha-D-ribose 1-diphosphate: step 1/9. In terms of biological role, required for the first step of histidine biosynthesis. May allow the feedback regulation of ATP phosphoribosyltransferase activity by histidine. This is ATP phosphoribosyltransferase regulatory subunit from Synechococcus sp. (strain WH7803).